The chain runs to 218 residues: Large ribosomal subunit protein uL3 (218 aa).

The segment at 126–169 is disordered; sequence HGFSRGPMTHGSKNHRQPGSIGAGTTPGRIYPGKRMSGRYGGKK.

This sequence belongs to the universal ribosomal protein uL3 family. As to quaternary structure, part of the 50S ribosomal subunit. Forms a cluster with proteins L14 and L19.

One of the primary rRNA binding proteins, it binds directly near the 3'-end of the 23S rRNA, where it nucleates assembly of the 50S subunit. The protein is Large ribosomal subunit protein uL3 of Synechococcus sp. (strain CC9902).